The sequence spans 326 residues: JNK1/MAPK8-associated membrane protein homolog (326 aa).

The Lumenal portion of the chain corresponds to 1–71 (MSSLSGHAST…CESCDTPLQP (71 aa)). Asn-27 is a glycosylation site (N-linked (GlcNAc...) asparagine). A helical transmembrane segment spans residues 72 to 92 (YDWMYLLFIALLPLLLHMQFI). The Cytoplasmic segment spans residues 93–108 (RIARKYCRTRYYEVSE). The helical transmembrane segment at 109–129 (YLCVILENVIACVIAVLIYPP) threads the bilayer. At 130 to 166 (RFTFFLNGCSKTDIKEWYPACYNPRIGYTKTMRCTYE) the chain is on the lumenal side. The chain crosses the membrane as a helical span at residues 167–187 (VVFPLYSITFIHHLILIGSIL). Residues 188–208 (VLRSTLYCVLLYKTYNGKPFY) are Cytoplasmic-facing. The next 2 helical transmembrane spans lie at 209–229 (AAIVSVPILAVIHAVLSGVVF) and 230–250 (YTFPYILLIGSLWAMCFHLAL). Residues 251–269 (EGKRPLKEMIVRIATSPTH) are Cytoplasmic-facing. A helical membrane pass occupies residues 270–290 (LIFLSITMLMLSFGVIAIIAP). Topologically, residues 291-296 (LDIPYR) are lumenal. A helical membrane pass occupies residues 297–317 (WSFLCIVPVPFIFYMATIPFS). Over 318–326 (NPTTTMRLS) the chain is Cytoplasmic.

The protein resides in the endoplasmic reticulum membrane. Its function is as follows. Facilitates degradation of misfolded endoplasmic reticulum (ER) proteins through the recruitment of components of the proteasome and endoplasmic reticulum-associated degradation (ERAD) system. Involved in ER stress response. In Caenorhabditis elegans, this protein is JNK1/MAPK8-associated membrane protein homolog.